The sequence spans 251 residues: Probable transcriptional regulatory protein jk1057 (251 aa).

The segment at 1 to 22 (MAGHSKWATTKHKKAANDAKRG) is disordered.

The protein belongs to the TACO1 family.

It localises to the cytoplasm. In Corynebacterium jeikeium (strain K411), this protein is Probable transcriptional regulatory protein jk1057.